The primary structure comprises 758 residues: MAPAMQPAEIQFAQRLASSEKGIRDRAVKKLRQYISVKTQRETGGFSQEELLKIWKGLFYCMWVQDEPLLQEELANTIAQLVHAVNNSAAQHLFIQTFWQTMNREWKGIDRLRLDKYYMLIRLVLRQSFEVLKRNGWEESRIKVFLDVLMKEVLCPESQSPNGVRFHFIDIYLDELSKVGGKELLADQNLKFIDPFCKIAAKTKDHTLVQTIARGVFEAIVDQSPFVPEETMEEQKTKVGDGDLSAEEIPENEVSLRRAVSKKKTALGKNHSRKDGLSDERGRDDCGTFEDTGPLLQFDYKAVADRLLEMTSRKNTPHFNRKRLSKLIKKFQDLSEGSSISQLSFAEDISADEDDQILSQGKHKKKGNKLLEKTNLEKEKGSRVFCVEEEDSESSLQKRRRKKKKKHHLQPENPGPGGAAPSLEQNRGREPEASGLKALKARVAEPGAEATSSTGEESGSEHPPAVPMHNKRKRPRKKSPRAHREMLESAVLPPEDMSQSGPSGSHPQGPRGSPTGGAQLLKRKRKLGVVPVNGSGLSTPAWPPLQQEGPPTGPAEGANSHTTLPQRRRLQKKKAGPGSLELCGLPSQKTASLKKRKKMRVMSNLVEHNGVLESEAGQPQALGSSGTCSSLKKQKLRAESDFVKFDTPFLPKPLFFRRAKSSTATHPPGPAVQLNKTPSSSKKVTFGLNRNMTAEFKKTDKSILVSPTGPSRVAFDPEQKPLHGVLKTPTSSPASSPLVAKKPLTTTPRRRPRAMDFF.

Serine 245 bears the Phosphoserine mark. Basic residues predominate over residues 259-272 (AVSKKKTALGKNHS). Residues 259 to 285 (AVSKKKTALGKNHSRKDGLSDERGRDD) form a disordered region. Residues 273-285 (RKDGLSDERGRDD) show a composition bias toward basic and acidic residues. Serine 350, serine 392, serine 394, and serine 395 each carry phosphoserine. Residues 381-598 (GSRVFCVEEE…KTASLKKRKK (218 aa)) form a disordered region. Basic residues predominate over residues 397 to 408 (QKRRRKKKKKHH). Over residues 447-457 (GAEATSSTGEE) the composition is skewed to low complexity. Phosphoserine occurs at positions 452 and 458. The segment covering 469–481 (HNKRKRPRKKSPR) has biased composition (basic residues). Positions 498-513 (SQSGPSGSHPQGPRGS) are enriched in low complexity. Serine 513 bears the Phosphoserine mark. Over residues 566–575 (QRRRLQKKKA) the composition is skewed to basic residues. Position 579 is a phosphoserine (serine 579). An N6-acetyllysine modification is found at lysine 652. Residues 660–681 (KSSTATHPPGPAVQLNKTPSSS) are disordered. Phosphoserine occurs at positions 702 and 706. Positions 707 to 758 (PTGPSRVAFDPEQKPLHGVLKTPTSSPASSPLVAKKPLTTTPRRRPRAMDFF) are disordered. Arginine 712 carries the citrulline modification. Threonine 728 is modified (phosphothreonine). Phosphoserine occurs at positions 732, 735, and 736.

It belongs to the RRP1 family. In terms of assembly, interacts with the transcriptional activator E2F1. Interacts with serine/threonine-protein phosphatase PP1 subunits PPP1CB and PPP1CC but not with PPP1CA. Interacts with 60S ribosomal proteins RPL5 and RPL27, ribosomal processing protein RRP1/NNP1 and other nucleolar proteins including NOP2/NOL1 and FBL. Also interacts with nucleolar protein NPM1/B23. Interacts with splicing factor SRSF1 and with LUC7L3/CROP. Interacts with GTPase activator SIPA1. Interacts with CBX5/HP1alpha, H1-10, NCL, PARP1, TRIM28 and YBX3. (Microbial infection) Interacts with influenza A virus nucleoprotein NP and with RNA-directed RNA polymerase subunits PB1 and PB2. Citrullinated by PADI4.

The protein resides in the nucleus. It is found in the nucleolus. It localises to the nucleoplasm. Its subcellular location is the chromosome. Its function is as follows. Positively regulates DNA damage-induced apoptosis by acting as a transcriptional coactivator of proapoptotic target genes of the transcriptional activator E2F1. Likely to play a role in ribosome biogenesis by targeting serine/threonine protein phosphatase PP1 to the nucleolus. Involved in regulation of mRNA splicing. Inhibits SIPA1 GTPase activity. Involved in regulating expression of extracellular matrix genes. Associates with chromatin and may play a role in modulating chromatin structure. In terms of biological role, (Microbial infection) Following influenza A virus (IAV) infection, promotes viral mRNA transcription by facilitating the binding of IAV RNA-directed RNA polymerase to capped mRNA. This Homo sapiens (Human) protein is Ribosomal RNA processing protein 1 homolog B (RRP1B).